We begin with the raw amino-acid sequence, 1205 residues long: Nitric oxide synthase 3 (1205 aa).

The disordered stretch occupies residues 1–73; it reads MGNLKSVGQE…PPEGPKFPRV (73 aa). Gly2 carries the N-myristoyl glycine lipid modification. Residues Cys15 and Cys26 are each lipidated (S-palmitoyl cysteine). Positions 15–27 are enriched in gly residues; it reads CGLGLGLGLGLCG. Positions 33 to 47 are enriched in pro residues; it reads TPAPEPSRAPAPATP. 2 residues coordinate Zn(2+): Cys96 and Cys101. Residues 100-488 form an interaction with NOSIP region; the sequence is RCLGSLVLPR…PDPWKGSAAK (389 aa). Ser104 is a (6R)-L-erythro-5,6,7,8-tetrahydrobiopterin binding site. Position 116 is a phosphoserine; by CDK5 (Ser116). Cys186 lines the heme b pocket. L-arginine-binding residues include Gln249, Trp358, Tyr359, Glu363, and Asn368. (6R)-L-erythro-5,6,7,8-tetrahydrobiopterin contacts are provided by Ala448, Trp449, and Phe462. Tyr477 serves as a coordination point for heme b. Residues 492 to 512 are calmodulin-binding; it reads IARKKTFKEVANAVKISASLM. Residue Thr497 is modified to Phosphothreonine; by AMPK. One can recognise a Flavodoxin-like domain in the interval 522 to 705; it reads ASILYASETV…AFRGWAQAAF (184 aa). FMN-binding residues include Ser528, Glu529, Thr530, Arg532, Ser574, and Thr575. Phosphoserine is present on residues Ser617, Ser635, and Ser640. FMN is bound by residues Ser656, Cys663, Glu689, and Gln693. The 247-residue stretch at 758-1004 folds into the FAD-binding FR-type domain; that stretch reads RKMFQATVLS…IRAAPSFRLP (247 aa). Residue Arg778 coordinates NADP(+). An FAD-binding site is contributed by His800. Residues 820–848 form a disordered region; that stretch reads EDPTPPTESVGVEQLEKGSPGGPPPSWVR. A Phosphoserine modification is found at Ser838. FAD-binding residues include Arg940, Tyr942, Ser943, Thr958, Ala960, Tyr964, Val977, Cys978, and Ser979. Thr1018, Arg1051, Ser1080, Arg1081, Lys1087, Tyr1089, and Gln1091 together coordinate NADP(+). At Thr1177 the chain carries Phosphothreonine. The residue at position 1179 (Ser1179) is a Phosphoserine; by AMPK. Ser1181 bears the Phosphoserine mark.

Belongs to the NOS family. Homodimer. Interacts with NOSIP and NOSTRIN. Interacts with HSP90AB1. Forms a complex with ASL, ASS1 and SLC7A1; the complex regulates cell-autonomous L-arginine synthesis and citrulline recycling while channeling extracellular L-arginine to nitric oxide synthesis pathway. It depends on heme b as a cofactor. FAD is required as a cofactor. FMN serves as cofactor. The cofactor is (6R)-L-erythro-5,6,7,8-tetrahydrobiopterin. Post-translationally, phosphorylation by AMPK at Ser-1179 in the presence of Ca(2+)-calmodulin (CaM) activates activity. In absence of Ca(2+)-calmodulin, AMPK also phosphorylates Thr-497, resulting in inhibition of activity. Phosphorylation of Ser-116 by CDK5 reduces activity.

It localises to the membrane. The protein resides in the caveola. Its subcellular location is the cytoplasm. It is found in the cytoskeleton. The protein localises to the golgi apparatus. It localises to the cell membrane. It catalyses the reaction 2 L-arginine + 3 NADPH + 4 O2 + H(+) = 2 L-citrulline + 2 nitric oxide + 3 NADP(+) + 4 H2O. Stimulated by calcium/calmodulin. Inhibited by NOSIP and NOSTRIN. Produces nitric oxide (NO) which is implicated in vascular smooth muscle relaxation through a cGMP-mediated signal transduction pathway. NO mediates vascular endothelial growth factor (VEGF)-induced angiogenesis in coronary vessels and promotes blood clotting through the activation of platelets. This chain is Nitric oxide synthase 3 (NOS3), found in Sus scrofa (Pig).